Reading from the N-terminus, the 640-residue chain is Protein cereblon (640 aa).

Residues 1 to 11 (MDDEETAEIDE) are compositionally biased toward acidic residues. 2 disordered regions span residues 1-25 (MDDE…ELGP) and 92-159 (REDP…EAVP). Over residues 113-137 (QPAQQEEQASLPYDSPSRASISSRH) the composition is skewed to low complexity. A Lon N-terminal domain is found at 278–506 (RMLIFMHQHI…IIDTTLKQES (229 aa)). A CULT domain is found at 505 to 614 (ESLFYCRYCN…LAGSSVRIGK (110 aa)). 4 residues coordinate Zn(2+): Cys-510, Cys-513, Cys-579, and Cys-582.

The protein belongs to the CRBN family. In terms of assembly, likely a component of a DCX (DDB1-CUL4-X-box) protein ligase complex. May interact with pic/DDB1. Post-translationally, ubiquitinated.

The protein resides in the nucleus. The protein operates within protein modification; protein ubiquitination. Substrate recognition component of a DCX (DDB1-CUL4-X-box) E3 protein ligase complex that mediates the ubiquitination and subsequent proteasomal degradation of target proteins. Has an essential role in mediating growth by negatively regulating insulin signaling. It also has a role in maintaining presynaptic function in the neuromuscular junction synapses of third-instar larvae. This Drosophila virilis (Fruit fly) protein is Protein cereblon.